A 365-amino-acid polypeptide reads, in one-letter code: Chorismate synthase (365 aa).

Positions 41 to 60 (MQHDLDRRRPGTSRYTTARR) are disordered. 2 residues coordinate NADP(+): Arg48 and Arg54. FMN-binding positions include 125-127 (RSS), 238-239 (NA), Gly278, 293-297 (KPTSS), and Arg319.

This sequence belongs to the chorismate synthase family. As to quaternary structure, homotetramer. The cofactor is FMNH2.

The enzyme catalyses 5-O-(1-carboxyvinyl)-3-phosphoshikimate = chorismate + phosphate. It participates in metabolic intermediate biosynthesis; chorismate biosynthesis; chorismate from D-erythrose 4-phosphate and phosphoenolpyruvate: step 7/7. Its function is as follows. Catalyzes the anti-1,4-elimination of the C-3 phosphate and the C-6 proR hydrogen from 5-enolpyruvylshikimate-3-phosphate (EPSP) to yield chorismate, which is the branch point compound that serves as the starting substrate for the three terminal pathways of aromatic amino acid biosynthesis. This reaction introduces a second double bond into the aromatic ring system. The chain is Chorismate synthase from Shewanella amazonensis (strain ATCC BAA-1098 / SB2B).